The following is a 76-amino-acid chain: Acyl carrier protein (76 aa).

The Carrier domain occupies 2 to 76; the sequence is SSIFDKVKAI…SAVEYIKENQ (75 aa). S36 is modified (O-(pantetheine 4'-phosphoryl)serine).

This sequence belongs to the acyl carrier protein (ACP) family. 4'-phosphopantetheine is transferred from CoA to a specific serine of apo-ACP by AcpS. This modification is essential for activity because fatty acids are bound in thioester linkage to the sulfhydryl of the prosthetic group.

The protein resides in the cytoplasm. It functions in the pathway lipid metabolism; fatty acid biosynthesis. Its function is as follows. Carrier of the growing fatty acid chain in fatty acid biosynthesis. In Heliobacterium modesticaldum (strain ATCC 51547 / Ice1), this protein is Acyl carrier protein.